The chain runs to 434 residues: Cytochrome b-c1 complex subunit 2, mitochondrial (434 aa).

Residues 1 to 31 (MYSLNRLPRSAAFKSSANLLRRNASTTSAGG) constitute a mitochondrion transit peptide.

It belongs to the peptidase M16 family. UQCRC2/QCR2 subfamily. As to quaternary structure, component of the ubiquinol-cytochrome c oxidoreductase (cytochrome b-c1 complex, complex III, CIII), a multisubunit enzyme composed of 10 subunits. The complex is composed of 3 respiratory subunits cytochrome b (COB), cytochrome c1 (CYT1) and Rieske protein (RIP1), 2 core protein subunits COR1 and QCR2, and 5 low-molecular weight protein subunits QCR6, QCR7, QCR8, QCR9 and QCR10. The complex exists as an obligatory dimer and forms supercomplexes (SCs) in the inner mitochondrial membrane with a monomer or a dimer of cytochrome c oxidase (complex IV, CIV), resulting in 2 different assemblies (supercomplexes III(2)IV and III(2)IV(2)). Interacts with MRJ1.

Its subcellular location is the mitochondrion inner membrane. In terms of biological role, component of the ubiquinol-cytochrome c oxidoreductase, a multisubunit transmembrane complex that is part of the mitochondrial electron transport chain which drives oxidative phosphorylation. The respiratory chain contains 3 multisubunit complexes succinate dehydrogenase (complex II, CII), ubiquinol-cytochrome c oxidoreductase (cytochrome b-c1 complex, complex III, CIII) and cytochrome c oxidase (complex IV, CIV), that cooperate to transfer electrons derived from NADH and succinate to molecular oxygen, creating an electrochemical gradient over the inner membrane that drives transmembrane transport and the ATP synthase. The cytochrome b-c1 complex catalyzes electron transfer from ubiquinol to cytochrome c, linking this redox reaction to translocation of protons across the mitochondrial inner membrane, with protons being carried across the membrane as hydrogens on the quinol. In the process called Q cycle, 2 protons are consumed from the matrix, 4 protons are released into the intermembrane space and 2 electrons are passed to cytochrome c. This is Cytochrome b-c1 complex subunit 2, mitochondrial from Cryptococcus neoformans var. grubii serotype A (strain H99 / ATCC 208821 / CBS 10515 / FGSC 9487) (Filobasidiella neoformans var. grubii).